The primary structure comprises 473 residues: Membrane-bound acylglycerophosphatidylinositol O-acyltransferase MBOAT7 (473 aa).

Residues 1-5 (MTPEE) lie on the Cytoplasmic side of the membrane. A helical membrane pass occupies residues 6–22 (WTYLMVLLISIPVGFLF). The Lumenal portion of the chain corresponds to 23-33 (KKAGPGLKRWG). Residues 34 to 57 (AAAVGLGLTLFTCGPHSLHSLITI) form a helical membrane-spanning segment. Residues 58 to 73 (LGTWALIQAQPCSCHA) are Cytoplasmic-facing. Residues 74-93 (LALAWTFSYLLFFRALSLLG) traverse the membrane as a helical segment. At 94–194 (LPTPTPFTNA…VPSLRPLLRR (101 aa)) the chain is on the lumenal side. Residues 195–212 (AWPAPLFGLLFLLSSHLF) traverse the membrane as a helical segment. Residues 213–231 (PLEAVREDAFYARPLPTRL) are Cytoplasmic-facing. A helical membrane pass occupies residues 232 to 261 (FYMIPVFFAFRMRFYVAWIAAECGCIAAGF). Residues 262-426 (GAYPVAAKAR…LSMADTLRYW (165 aa)) lie on the Lumenal side of the membrane. Asparagine 321 is a glycosylation site (N-linked (GlcNAc...) asparagine). The chain crosses the membrane as a helical span at residues 427–447 (ASIYFWVHFLALACLGLGLVL). Over 448–473 (GGGSPSKRKTPSQATSSQAKEKLREE) the chain is Cytoplasmic. The tract at residues 451–473 (SPSKRKTPSQATSSQAKEKLREE) is disordered.

This sequence belongs to the membrane-bound acyltransferase family. In terms of assembly, interacts with SPTSSA; the interaction facilitates MBOAT7 location to mitochondria-associated membranes (MAMs).

Its subcellular location is the endoplasmic reticulum membrane. It catalyses the reaction a 1-acyl-sn-glycero-3-phospho-(1D-myo-inositol) + an acyl-CoA = a 1,2-diacyl-sn-glycero-3-phospho-(1D-myo-inositol) + CoA. The enzyme catalyses 1-octadecanoyl-sn-glycero-3-phospho-(1D-myo-inositol) + (5Z,8Z,11Z,14Z)-eicosatetraenoyl-CoA = 1-octadecanoyl-2-(5Z,8Z,11Z,14Z-eicosatetraenoyl)-sn-glycero-3-phospho-(1D-myo-inositol) + CoA. The catalysed reaction is a 1-acyl-sn-glycero-3-phospho-(1D-myo-inositol) + (5Z,8Z,11Z,14Z)-eicosatetraenoyl-CoA = a 1-acyl-2-(5Z,8Z,11Z,14Z-eicosatetraenoyl)-sn-glycero-3-phospho-(1D-myo-inositol) + CoA. It carries out the reaction (5Z,8Z,11Z,14Z)-eicosatetraenoyl-CoA + 1-hexadecanoyl-sn-glycero-3-phosphocholine = 1-hexadecanoyl-2-(5Z,8Z,11Z,14Z-eicosatetraenoyl)-sn-glycero-3-phosphocholine + CoA. It functions in the pathway lipid metabolism; phospholipid metabolism. Functionally, acyltransferase which catalyzes the transfer of an acyl group from an acyl-CoA to a lysophosphatidylinositol (1-acylglycerophosphatidylinositol or LPI) leading to the production of a phosphatidylinositol (1,2-diacyl-sn-glycero-3-phosphoinositol or PI) and participates in the reacylation step of the phospholipid remodeling pathway also known as the Lands cycle. Prefers arachidonoyl-CoA as the acyl donor, thus contributing to the regulation of free levels arachidonic acid in cell. In liver, participates in the regulation of triglyceride metabolism through the phosphatidylinositol acyl-chain remodeling regulation. This Mus musculus (Mouse) protein is Membrane-bound acylglycerophosphatidylinositol O-acyltransferase MBOAT7.